We begin with the raw amino-acid sequence, 1077 residues long: Disheveled-associated activator of morphogenesis 1 (1077 aa).

The residue at position 34 (Ser34) is a Phosphoserine. Positions 45–420 (LPMPPVEELD…QIVIQNDKGQ (376 aa)) constitute a GBD/FH3 domain. A coiled-coil region spans residues 437 to 526 (RMLVNENEVK…ELNRRAVCAA (90 aa)). 2 disordered regions span residues 457 to 478 (KEHN…AKTQ) and 526 to 596 (AVPG…PVSL). The FH1 domain occupies 528-599 (PGGPSPGAPG…PGAPVSLTLK (72 aa)). Composition is skewed to pro residues over residues 530-539 (GPSPGAPGGP) and 549-592 (LPPP…PPGA). In terms of domain architecture, FH2 spans 600–1008 (KKNIPQPTNA…EERRARLEAQ (409 aa)). Residues 693 to 702 (QNCNILLSRL) form an actin-binding region. Residues 1007 to 1026 (AQLKEQRERERKVRKAKESS) show a composition bias toward basic and acidic residues. Disordered regions lie at residues 1007 to 1033 (AQLK…GEFD) and 1056 to 1077 (RKRI…KLNF). 2 positions are modified to phosphoserine: Ser1026 and Ser1029. The DAD domain maps to 1026–1057 (SEESGEFDDLVSALRSGEVFDKDLSKLKRNRK). Positions 1066-1077 (SSRERPITKLNF) are enriched in basic and acidic residues.

It belongs to the formin homology family. Interacts with CIP4, FNBP1 and FNBP1L. Interacts with the SH3 domains of Abl, BTK, endophilin, spectrin and SRC. Binds specifically to GTP-bound CDC42 and RHOA. Interacts with INTU; INTU mediates the indirect interaction between DAAM1 and NPHP4. Interacts (via coiled coil domain) with KANK1 (via coiled coil domain). In early embryogenesis, expressed in embryonic and extraembryonic ectoderm. In later stages of gastrulation, expressed also in somites and ribs and posterior vertebrae of developing skeletal system. During organogenesis, expressed in CNS, PNS, stomach, liver and limb bud.

It localises to the cytoplasm. The protein localises to the cytoskeleton. Its subcellular location is the cilium basal body. In terms of biological role, binds to disheveled (Dvl) and Rho, and mediates Wnt-induced Dvl-Rho complex formation. May play a role as a scaffolding protein to recruit Rho-GDP and Rho-GEF, thereby enhancing Rho-GTP formation. Can direct nucleation and elongation of new actin filaments. Involved in building functional cilia. Involved in the organization of the subapical actin network in multiciliated epithelial cells. Together with DAAM2, required for myocardial maturation and sarcomere assembly. During cell division, may regulate RHOA activation that signals spindle orientation and chromosomal segregation. The chain is Disheveled-associated activator of morphogenesis 1 (Daam1) from Mus musculus (Mouse).